Consider the following 158-residue polypeptide: Sec-independent protein translocase protein TatB (158 aa).

The helical transmembrane segment at 1 to 21 (MFGISFSELLLVGLVALLVLG) threads the bilayer. The tract at residues 73–158 (DEARKMFAPN…HDSSLPPRAP (86 aa)) is disordered. Residues 80–90 (APNQPSENSPE) are compositionally biased toward low complexity.

It belongs to the TatB family. The Tat system comprises two distinct complexes: a TatABC complex, containing multiple copies of TatA, TatB and TatC subunits, and a separate TatA complex, containing only TatA subunits. Substrates initially bind to the TatABC complex, which probably triggers association of the separate TatA complex to form the active translocon.

It is found in the cell inner membrane. Its function is as follows. Part of the twin-arginine translocation (Tat) system that transports large folded proteins containing a characteristic twin-arginine motif in their signal peptide across membranes. Together with TatC, TatB is part of a receptor directly interacting with Tat signal peptides. TatB may form an oligomeric binding site that transiently accommodates folded Tat precursor proteins before their translocation. The polypeptide is Sec-independent protein translocase protein TatB (Pseudomonas syringae pv. syringae (strain B728a)).